A 549-amino-acid chain; its full sequence is Glucose-6-phosphate isomerase (549 aa).

Catalysis depends on Glu-352, which acts as the Proton donor. Catalysis depends on residues His-383 and Lys-511.

Belongs to the GPI family.

It is found in the cytoplasm. The enzyme catalyses alpha-D-glucose 6-phosphate = beta-D-fructose 6-phosphate. Its pathway is carbohydrate biosynthesis; gluconeogenesis. The protein operates within carbohydrate degradation; glycolysis; D-glyceraldehyde 3-phosphate and glycerone phosphate from D-glucose: step 2/4. Catalyzes the reversible isomerization of glucose-6-phosphate to fructose-6-phosphate. The polypeptide is Glucose-6-phosphate isomerase (Methylocella silvestris (strain DSM 15510 / CIP 108128 / LMG 27833 / NCIMB 13906 / BL2)).